The primary structure comprises 300 residues: Protein p34 (300 aa).

Helical transmembrane passes span 14–34 (YLSVTTALIILIIKLYAWVVT), 39–59 (ILASLIDSMLDITSSFINLVA), 87–107 (SIFFFASAFFVGFASVKSLFI), 119–139 (IIMYLCMFLTIILVLYQTYVI), and 170–190 (LSDYFWFVDPLFGVVISLYIF).

Belongs to the cation diffusion facilitator (CDF) transporter (TC 2.A.4) family.

It localises to the cell membrane. The sequence is that of Protein p34 (p34) from Rickettsia prowazekii (strain Madrid E).